The sequence spans 330 residues: ADP-L-glycero-D-manno-heptose-6-epimerase (330 aa).

NADP(+) is bound by residues 11–12 (FI), 32–33 (DN), lysine 39, lysine 54, 75–79 (EGACS), and asparagine 92. The Proton acceptor role is filled by tyrosine 139. Lysine 143 is an NADP(+) binding site. Asparagine 168 lines the substrate pocket. Residues valine 169 and lysine 177 each contribute to the NADP(+) site. Lysine 177 (proton acceptor) is an active-site residue. Residues arginine 179, histidine 186, 200 to 203 (FGEY), arginine 213, and tyrosine 292 each bind substrate.

This sequence belongs to the NAD(P)-dependent epimerase/dehydratase family. HldD subfamily. As to quaternary structure, homopentamer. The cofactor is NADP(+).

The catalysed reaction is ADP-D-glycero-beta-D-manno-heptose = ADP-L-glycero-beta-D-manno-heptose. The protein operates within nucleotide-sugar biosynthesis; ADP-L-glycero-beta-D-manno-heptose biosynthesis; ADP-L-glycero-beta-D-manno-heptose from D-glycero-beta-D-manno-heptose 7-phosphate: step 4/4. Catalyzes the interconversion between ADP-D-glycero-beta-D-manno-heptose and ADP-L-glycero-beta-D-manno-heptose via an epimerization at carbon 6 of the heptose. The polypeptide is ADP-L-glycero-D-manno-heptose-6-epimerase (Burkholderia pseudomallei (strain 1026b)).